The following is a 403-amino-acid chain: Tryptophan synthase beta chain (403 aa).

Position 90 is an N6-(pyridoxal phosphate)lysine (Lys90).

This sequence belongs to the TrpB family. Tetramer of two alpha and two beta chains. Requires pyridoxal 5'-phosphate as cofactor.

The catalysed reaction is (1S,2R)-1-C-(indol-3-yl)glycerol 3-phosphate + L-serine = D-glyceraldehyde 3-phosphate + L-tryptophan + H2O. Its pathway is amino-acid biosynthesis; L-tryptophan biosynthesis; L-tryptophan from chorismate: step 5/5. Its function is as follows. The beta subunit is responsible for the synthesis of L-tryptophan from indole and L-serine. This chain is Tryptophan synthase beta chain, found in Leifsonia xyli subsp. xyli (strain CTCB07).